The chain runs to 109 residues: Cell division protein ZapA (109 aa).

Residues 21 to 99 are a coiled coil; the sequence is PEQRDALNQA…IEQALLEQGR (79 aa).

This sequence belongs to the ZapA family. Type 1 subfamily. In terms of assembly, homodimer. Interacts with FtsZ.

The protein localises to the cytoplasm. Its function is as follows. Activator of cell division through the inhibition of FtsZ GTPase activity, therefore promoting FtsZ assembly into bundles of protofilaments necessary for the formation of the division Z ring. It is recruited early at mid-cell but it is not essential for cell division. The sequence is that of Cell division protein ZapA from Cronobacter sakazakii (strain ATCC BAA-894) (Enterobacter sakazakii).